The chain runs to 174 residues: UPF0664 stress-induced protein C29B12.11c (174 aa).

The interval 147–174 is disordered; it reads HLDPLPPYHRPSSSQDQPPHYEEAVNKS. Over residues 165–174 the composition is skewed to basic and acidic residues; sequence PHYEEAVNKS.

It belongs to the UPF0664 family.

The protein localises to the cytoplasm. It is found in the nucleus. This Schizosaccharomyces pombe (strain 972 / ATCC 24843) (Fission yeast) protein is UPF0664 stress-induced protein C29B12.11c.